A 604-amino-acid chain; its full sequence is Elongation factor 4 (604 aa).

The 182-residue stretch at 10–191 (KNIRNFSIIA…KIITTIPAPS (182 aa)) folds into the tr-type G domain. Residues 22 to 27 (DHGKST) and 138 to 141 (NKID) contribute to the GTP site.

Belongs to the TRAFAC class translation factor GTPase superfamily. Classic translation factor GTPase family. LepA subfamily.

The protein localises to the cell inner membrane. It catalyses the reaction GTP + H2O = GDP + phosphate + H(+). Its function is as follows. Required for accurate and efficient protein synthesis under certain stress conditions. May act as a fidelity factor of the translation reaction, by catalyzing a one-codon backward translocation of tRNAs on improperly translocated ribosomes. Back-translocation proceeds from a post-translocation (POST) complex to a pre-translocation (PRE) complex, thus giving elongation factor G a second chance to translocate the tRNAs correctly. Binds to ribosomes in a GTP-dependent manner. In Helicobacter acinonychis (strain Sheeba), this protein is Elongation factor 4.